A 395-amino-acid chain; its full sequence is NAD(P)H-quinone oxidoreductase subunit H (395 aa).

It belongs to the complex I 49 kDa subunit family. As to quaternary structure, NDH-1 can be composed of about 15 different subunits; different subcomplexes with different compositions have been identified which probably have different functions.

It localises to the cellular thylakoid membrane. It carries out the reaction a plastoquinone + NADH + (n+1) H(+)(in) = a plastoquinol + NAD(+) + n H(+)(out). It catalyses the reaction a plastoquinone + NADPH + (n+1) H(+)(in) = a plastoquinol + NADP(+) + n H(+)(out). Functionally, NDH-1 shuttles electrons from an unknown electron donor, via FMN and iron-sulfur (Fe-S) centers, to quinones in the respiratory and/or the photosynthetic chain. The immediate electron acceptor for the enzyme in this species is believed to be plastoquinone. Couples the redox reaction to proton translocation, and thus conserves the redox energy in a proton gradient. Cyanobacterial NDH-1 also plays a role in inorganic carbon-concentration. This chain is NAD(P)H-quinone oxidoreductase subunit H, found in Prochlorococcus marinus (strain MIT 9312).